Consider the following 529-residue polypeptide: tRNA-2-methylthio-N(6)-dimethylallyladenosine synthase 1 (529 aa).

The disordered stretch occupies residues 1 to 21; that stretch reads MTQDHIVTERPPATRNDTAGN. Residues 25–141 form the MTTase N-terminal domain; the sequence is RTYEVRTLGC…LPVLLERSRH (117 aa). Cys-34, Cys-70, Cys-104, Cys-178, Cys-182, and Cys-185 together coordinate [4Fe-4S] cluster. Residues 164–407 enclose the Radical SAM core domain; it reads RDSAYAAWVS…VALQERISLE (244 aa). A TRAM domain is found at 410–480; sequence RSLVGTRQEL…PHHLIADGPL (71 aa). Positions 481–504 are disordered; that stretch reads LQHRRTPAGDASERGQTPTTRGVG.

Belongs to the methylthiotransferase family. MiaB subfamily. Monomer. Requires [4Fe-4S] cluster as cofactor.

It is found in the cytoplasm. The catalysed reaction is N(6)-dimethylallyladenosine(37) in tRNA + (sulfur carrier)-SH + AH2 + 2 S-adenosyl-L-methionine = 2-methylsulfanyl-N(6)-dimethylallyladenosine(37) in tRNA + (sulfur carrier)-H + 5'-deoxyadenosine + L-methionine + A + S-adenosyl-L-homocysteine + 2 H(+). Functionally, catalyzes the methylthiolation of N6-(dimethylallyl)adenosine (i(6)A), leading to the formation of 2-methylthio-N6-(dimethylallyl)adenosine (ms(2)i(6)A) at position 37 in tRNAs that read codons beginning with uridine. This chain is tRNA-2-methylthio-N(6)-dimethylallyladenosine synthase 1, found in Mycobacterium marinum (strain ATCC BAA-535 / M).